Consider the following 87-residue polypeptide: Small ribosomal subunit protein bS16 (87 aa).

This sequence belongs to the bacterial ribosomal protein bS16 family.

The chain is Small ribosomal subunit protein bS16 from Ehrlichia ruminantium (strain Welgevonden).